Consider the following 455-residue polypeptide: Probable glycine dehydrogenase (decarboxylating) subunit 1 (455 aa).

This sequence belongs to the GcvP family. N-terminal subunit subfamily. In terms of assembly, the glycine cleavage system is composed of four proteins: P, T, L and H. In this organism, the P 'protein' is a heterodimer of two subunits.

It catalyses the reaction N(6)-[(R)-lipoyl]-L-lysyl-[glycine-cleavage complex H protein] + glycine + H(+) = N(6)-[(R)-S(8)-aminomethyldihydrolipoyl]-L-lysyl-[glycine-cleavage complex H protein] + CO2. In terms of biological role, the glycine cleavage system catalyzes the degradation of glycine. The P protein binds the alpha-amino group of glycine through its pyridoxal phosphate cofactor; CO(2) is released and the remaining methylamine moiety is then transferred to the lipoamide cofactor of the H protein. This chain is Probable glycine dehydrogenase (decarboxylating) subunit 1, found in Francisella tularensis subsp. novicida (strain U112).